Consider the following 325-residue polypeptide: Isoaspartyl peptidase/L-asparaginase (325 aa).

Residue T193 is the Nucleophile of the active site. Residues 221–224 and 243–246 each bind substrate; these read RIGD and TGKG.

It belongs to the Ntn-hydrolase family. As to quaternary structure, heterotetramer of two alpha and two beta chains arranged as a dimer of alpha/beta heterodimers. Post-translationally, cleaved into an alpha and beta chain by autocatalysis; this activates the enzyme. The N-terminal residue of the beta subunit is responsible for the nucleophile hydrolase activity. In terms of tissue distribution, expressed in ripening seeds and developing nodules.

It carries out the reaction Cleavage of a beta-linked Asp residue from the N-terminus of a polypeptide.. Its function is as follows. Degrades proteins damaged by L-isoaspartyl residue formation (also known as beta-Asp residues). Also has L-asparaginase activity, which is used to liberate stored nitrogen during seed development. In Lupinus luteus (European yellow lupine), this protein is Isoaspartyl peptidase/L-asparaginase.